The primary structure comprises 1939 residues: Myosin-8 (1939 aa).

The Myosin N-terminal SH3-like domain occupies 35-84 (DAKTSVFVAEPKASYVKSTIQSKEGGKVTVKTEGGATLTVREDQVFPMNP). A phosphothreonine mark is found at Thr66 and Thr71. The Myosin motor domain maps to 88 to 783 (DKIEDMAMMT…LLGLLEEMRD (696 aa)). Lys132 bears the N6,N6,N6-trimethyllysine mark. ATP is bound at residue 181-188 (GESGAGKT). Position 391 is a phosphotyrosine (Tyr391). Thr421 is modified (phosphothreonine). Residue Tyr426 is modified to Phosphotyrosine. A Phosphoserine modification is found at Ser627. Positions 660-682 (LNKLMTNLRSTHPHFVRCIIPNE) are actin-binding. Pros-methylhistidine is present on His758. The segment at 762–776 (KFGHTKVFFKAGLLG) is actin-binding. Residues 783–815 (DEKLSQIITRTQAVCRGFLMRVEYQKMLQRREA) form the IQ domain. Positions 844–1939 (LLKSAETEKE…REVHTKISAE (1096 aa)) form a coiled coil. Ser1093, Ser1097, Ser1163, and Ser1238 each carry phosphoserine. Residue Thr1242 is modified to Phosphothreonine. Phosphoserine is present on Ser1244. Phosphothreonine is present on Thr1256. Ser1262 carries the post-translational modification Phosphoserine. A phosphothreonine mark is found at Thr1266 and Thr1287. A phosphoserine mark is found at Ser1293, Ser1304, and Ser1307. Residue Tyr1465 is modified to Phosphotyrosine. The residue at position 1468 (Thr1468) is a Phosphothreonine. Position 1475 is a phosphoserine (Ser1475). Residue Tyr1493 is modified to Phosphotyrosine. Ser1496 is modified (phosphoserine). The residue at position 1502 (Thr1502) is a Phosphothreonine. Ser1515 carries the post-translational modification Phosphoserine. Thr1518 bears the Phosphothreonine mark. Residues Ser1555, Ser1575, Ser1601, Ser1604, Ser1715, and Ser1727 each carry the phosphoserine modification. A Phosphothreonine modification is found at Thr1731. A Phosphoserine modification is found at Ser1740.

The protein belongs to the TRAFAC class myosin-kinesin ATPase superfamily. Myosin family. In terms of assembly, muscle myosin is a hexameric protein that consists of 2 heavy chain subunits (MHC), 2 alkali light chain subunits (MLC) and 2 regulatory light chain subunits (MLC-2).

The protein localises to the cytoplasm. Its subcellular location is the myofibril. In terms of biological role, muscle contraction. The sequence is that of Myosin-8 (MYH8) from Canis lupus familiaris (Dog).